The sequence spans 458 residues: Argininosuccinate lyase (458 aa).

This sequence belongs to the lyase 1 family. Argininosuccinate lyase subfamily.

The protein localises to the cytoplasm. The catalysed reaction is 2-(N(omega)-L-arginino)succinate = fumarate + L-arginine. It participates in amino-acid biosynthesis; L-arginine biosynthesis; L-arginine from L-ornithine and carbamoyl phosphate: step 3/3. This is Argininosuccinate lyase from Salmonella schwarzengrund (strain CVM19633).